Reading from the N-terminus, the 529-residue chain is Peptide chain release factor 3 (529 aa).

In terms of domain architecture, tr-type G spans 11-280 (AKRRTFAIIS…GLVEWAPAPM (270 aa)). GTP contacts are provided by residues 20–27 (SHPDAGKT), 88–92 (DTPGH), and 142–145 (NKLD).

The protein belongs to the TRAFAC class translation factor GTPase superfamily. Classic translation factor GTPase family. PrfC subfamily.

The protein localises to the cytoplasm. Increases the formation of ribosomal termination complexes and stimulates activities of RF-1 and RF-2. It binds guanine nucleotides and has strong preference for UGA stop codons. It may interact directly with the ribosome. The stimulation of RF-1 and RF-2 is significantly reduced by GTP and GDP, but not by GMP. The polypeptide is Peptide chain release factor 3 (Salmonella arizonae (strain ATCC BAA-731 / CDC346-86 / RSK2980)).